Reading from the N-terminus, the 287-residue chain is Pantothenate synthetase (287 aa).

30-37 (MGNLHSGH) provides a ligand contact to ATP. His37 acts as the Proton donor in catalysis. Gln61 is a (R)-pantoate binding site. Residue Gln61 coordinates beta-alanine. 149–152 (GEKD) is a binding site for ATP. Gln155 serves as a coordination point for (R)-pantoate. ATP is bound by residues Val178 and 186–189 (LSSR).

It belongs to the pantothenate synthetase family. As to quaternary structure, homodimer.

Its subcellular location is the cytoplasm. It carries out the reaction (R)-pantoate + beta-alanine + ATP = (R)-pantothenate + AMP + diphosphate + H(+). It functions in the pathway cofactor biosynthesis; (R)-pantothenate biosynthesis; (R)-pantothenate from (R)-pantoate and beta-alanine: step 1/1. Functionally, catalyzes the condensation of pantoate with beta-alanine in an ATP-dependent reaction via a pantoyl-adenylate intermediate. This Pseudomonas entomophila (strain L48) protein is Pantothenate synthetase.